The sequence spans 228 residues: uncharacterized protein (228 aa).

A disordered region spans residues 90–115 (TDESEESSSANNTTTTASHTLSNSKK). The span at 96-113 (SSSANNTTTTASHTLSNS) shows a compositional bias: low complexity.

It localises to the cytoplasm. Its subcellular location is the cell cortex. In terms of biological role, deletion results in antifungal drug fluconazole-resistant phenotype. This is an uncharacterized protein from Saccharomyces cerevisiae (strain ATCC 204508 / S288c) (Baker's yeast).